The primary structure comprises 582 residues: Leucine-rich repeat protein SHOC-2 (582 aa).

Composition is skewed to basic and acidic residues over residues 1–29 and 36–57; these read MSSSLGKEKDSKEKDPKVPSAKEREKEAK and KESKEKEPKTKGKDAKDGKKDS. A disordered region spans residues 1-88; that stretch reads MSSSLGKEKD…PGTRKKSSNA (88 aa). The short motif at 63–66 is the RVxF motif; important for interaction with PP1c element; sequence GVAF. 20 LRR repeats span residues 101–122, 124–145, 147–169, 170–191, 193–214, 216–237, 239–260, 262–283, 285–307, 308–329, 332–353, 356–377, 380–400, 403–424, 426–448, 449–470, 472–494, 495–516, 518–540, and 542–563; these read NSMRLDLSKRSIHILPSSIKEL, QLTELYLYSNKLQSLPAEVGCL, NLMTLALSENSLTSLPDSLDNLK, KLRMLDLRHNKLREIPSVVYRL, SLTTLYLRFNRITTVEKDIKNL, KLSMLSIRENKIKQLPAEIGEL, NLITLDVAHNQLEHLPKEIGNC, QITNLDLQHNELLDLPDTIGNL, SLSRLGLRYNRLSAIPRSLAKCS, ALEELNLENNNISTLPESLLSS, KLNSLTLARNCFQLYPVGGPSQ, TIYSLNMEHNRINKIPFGIFSR, VLSKLNMKDNQLTSLPLDFGT, SMVELNLATNQLTKIPEDVSGL, SLEVLILSNNLLKKLPHGLGNLR, KLRELDLEENKLESLPNEIAYL, DLQKLVLTNNQLTTLPRGIGHLT, NLTHLGLGENLLTHLPEEIGTL, NLEELYLNDNPNLHSLPFELALC, and KLSIMSIENCPLSHLPPQIVAG.

Belongs to the SHOC2 family. Component of the SHOC2-MRAS-PP1c (SMP) complex consisting of SHOC2, GTP-bound M-Ras/MRAS and the catalytic subunit of protein phosphatase 1 (either PPP1CA, PPP1CB or PPP1CC). SHOC2 and PP1c preferably bind M-Ras/MRAS, but they also bind K-Ras/KRAS, N-Ras/NRAS and H-Ras/HRAS; these interactions are GTP-dependent and both SHOC2 and PP1c are required to form a stable complex. Interacts with PP1c in the absence of Ras GTPases. Interacts with M-Ras/MRAS and RAF1. Interacts with ERBIN; disrupts the interaction with RAF1 and Ras, preventing the activation of the Ras signaling pathway. Interacts with LZTR1.

The protein resides in the cytoplasm. It localises to the nucleus. Functionally, core component of the SHOC2-MRAS-PP1c (SMP) holophosphatase complex that regulates activation of the MAPK pathway. Acts as a scaffolding protein in the SMP complex. The SMP complex specifically dephosphorylates the inhibitory phosphorylation at 'Ser-259' of RAF1 kinase, 'Ser-365' of BRAF kinase and 'Ser-214' of ARAF kinase, stimulating their kinase activities. The SMP complex enhances the dephosphorylation activity and substrate specificity of PP1c. The protein is Leucine-rich repeat protein SHOC-2 (SHOC2) of Homo sapiens (Human).